Consider the following 147-residue polypeptide: Hemoglobin subunit delta (147 aa).

Positions 3–147 (HLTADEKAAV…VAAALAHKYH (145 aa)) constitute a Globin domain. 2 residues coordinate heme b: His-64 and His-93.

This sequence belongs to the globin family. Heterotetramer of two delta chains and two alpha chains. As to expression, red blood cells.

This chain is Hemoglobin subunit delta (HBD), found in Carlito syrichta (Philippine tarsier).